Consider the following 740-residue polypeptide: MPKYKHVEDILKIMRNVEQVRNIGIIAHVDHGKTTTSDALLAHAGILSPKLAGEARALDYLDVEQQRGITVKAANVSLYHEYKGKPYVINLIDTPGHVDFSGKVTRSLRVLDGAILVVDAVEGVMTQTETVLRQALEELVRPLLFINKVDRLIKELKLSPQEIQQRIVQIIKDVNERILTFAPDPEIAKKWLLDPAKGHVALGSAKDKWGITIPMAQEKGIKFSDIVEAYAKGSKDAIEELFHKAPLHETLLDMVVRWVPNPREAQKYRVPRLWKGDINSELGKAMLNCDPEGPLVVFINDMRLDPHTKRLVATGRVWAGTATAGKEVWLVNAQKPGKILQVSIYMGPDREIVDYVTAGNIVAMLGLDDARAGETLVDINYKDQAAPFEQLHYVSEPVVTVAIEPKNPRDLPKLIEALRTLSIEDPNLKVTINQETGEYLLSGMGMLHIEIALTQLKEVYGLEVKVSPPVITYRETVRKPGEKVEGKSPNKHNKLYITVEPLEKEVIEMIQKGEITDDQDPRERAKVLRDKVNWDADTARRIWAVDEENFNIFIDKTVGVQHLREVKDTILAGWRLAMKEGPLAKEPVRGVKVILWDAVIHEDPAHRGPAQLYPAVRNAVYASMLTDSPTLLEPWQKLDIRVPNEYIGAVTGVITKHRGKILEVIDMGGQARIVAAVPIAESFELPMELRSVTAGRAFWGTEFYGWEPVPDQLLPELIRKIRERKGLPPEPPKAEDFLGP.

Residues 18 to 263 (EQVRNIGIIA…MVVRWVPNPR (246 aa)) enclose the tr-type G domain. Residues 27–34 (AHVDHGKT), 93–97 (DTPGH), and 147–150 (NKVD) each bind GTP. At His606 the chain carries Diphthamide.

Belongs to the TRAFAC class translation factor GTPase superfamily. Classic translation factor GTPase family. EF-G/EF-2 subfamily.

It is found in the cytoplasm. Functionally, catalyzes the GTP-dependent ribosomal translocation step during translation elongation. During this step, the ribosome changes from the pre-translocational (PRE) to the post-translocational (POST) state as the newly formed A-site-bound peptidyl-tRNA and P-site-bound deacylated tRNA move to the P and E sites, respectively. Catalyzes the coordinated movement of the two tRNA molecules, the mRNA and conformational changes in the ribosome. The sequence is that of Elongation factor 2 from Ignicoccus hospitalis (strain KIN4/I / DSM 18386 / JCM 14125).